Reading from the N-terminus, the 321-residue chain is Coproporphyrin III ferrochelatase (321 aa).

His185 and Glu267 together coordinate Fe(2+).

Belongs to the ferrochelatase family.

The protein localises to the cytoplasm. The enzyme catalyses Fe-coproporphyrin III + 2 H(+) = coproporphyrin III + Fe(2+). Its pathway is porphyrin-containing compound metabolism; protoheme biosynthesis. Involved in coproporphyrin-dependent heme b biosynthesis. Catalyzes the insertion of ferrous iron into coproporphyrin III to form Fe-coproporphyrin III. The polypeptide is Coproporphyrin III ferrochelatase (Lacticaseibacillus paracasei (strain ATCC 334 / BCRC 17002 / CCUG 31169 / CIP 107868 / KCTC 3260 / NRRL B-441) (Lactobacillus paracasei)).